The chain runs to 680 residues: DNA ligase 1 (680 aa).

NAD(+) is bound by residues 35–39, 84–85, and Asp-115; these read DAEYD and SL. The active-site N6-AMP-lysine intermediate is the Lys-117. Residues Arg-138, Glu-175, Lys-295, and Lys-319 each coordinate NAD(+). 4 residues coordinate Zn(2+): Cys-413, Cys-416, Cys-431, and Cys-436. In terms of domain architecture, BRCT spans 599-680; the sequence is REGSQLQGLK…FANLLKGLDR (82 aa).

Belongs to the NAD-dependent DNA ligase family. LigA subfamily. It depends on Mg(2+) as a cofactor. Mn(2+) serves as cofactor.

The enzyme catalyses NAD(+) + (deoxyribonucleotide)n-3'-hydroxyl + 5'-phospho-(deoxyribonucleotide)m = (deoxyribonucleotide)n+m + AMP + beta-nicotinamide D-nucleotide.. DNA ligase that catalyzes the formation of phosphodiester linkages between 5'-phosphoryl and 3'-hydroxyl groups in double-stranded DNA using NAD as a coenzyme and as the energy source for the reaction. It is essential for DNA replication and repair of damaged DNA. This chain is DNA ligase 1, found in Nitratidesulfovibrio vulgaris (strain DP4) (Desulfovibrio vulgaris).